Consider the following 162-residue polypeptide: NADH-quinone oxidoreductase subunit I (162 aa).

2 4Fe-4S ferredoxin-type domains span residues 54 to 83 (RRYE…INST) and 93 to 122 (SSYE…ETNI). Residues Cys63, Cys66, Cys69, Cys73, Cys102, Cys105, Cys108, and Cys112 each coordinate [4Fe-4S] cluster.

It belongs to the complex I 23 kDa subunit family. In terms of assembly, NDH-1 is composed of 14 different subunits. Subunits NuoA, H, J, K, L, M, N constitute the membrane sector of the complex. [4Fe-4S] cluster is required as a cofactor.

It is found in the cell inner membrane. It carries out the reaction a quinone + NADH + 5 H(+)(in) = a quinol + NAD(+) + 4 H(+)(out). NDH-1 shuttles electrons from NADH, via FMN and iron-sulfur (Fe-S) centers, to quinones in the respiratory chain. The immediate electron acceptor for the enzyme in this species is believed to be ubiquinone. Couples the redox reaction to proton translocation (for every two electrons transferred, four hydrogen ions are translocated across the cytoplasmic membrane), and thus conserves the redox energy in a proton gradient. This chain is NADH-quinone oxidoreductase subunit I, found in Francisella philomiragia subsp. philomiragia (strain ATCC 25017 / CCUG 19701 / FSC 153 / O#319-036).